Reading from the N-terminus, the 719-residue chain is UvrABC system protein B (719 aa).

Residues 49-435 enclose the Helicase ATP-binding domain; it reads RRINAGERDV…TGGEFVEQVI (387 aa). Residue 62–69 participates in ATP binding; sequence GATGTGKS. A Beta-hairpin motif is present at residues 115–138; that stretch reads YYDYYQPEAYIAQTDTYIEKDSSI. The Helicase C-terminal domain occupies 453–606; that stretch reads QIDDLIGEIR…QIAYNEANGI (154 aa). Positions 635–654 are disordered; the sequence is GGSGRNASRGRRAQGEPGRA. Residues 674–709 form the UVR domain; sequence ADLIKDLTAQMMAAARDLQFELAARFRDEIADLKRE.

The protein belongs to the UvrB family. Forms a heterotetramer with UvrA during the search for lesions. Interacts with UvrC in an incision complex.

The protein localises to the cytoplasm. Its function is as follows. The UvrABC repair system catalyzes the recognition and processing of DNA lesions. A damage recognition complex composed of 2 UvrA and 2 UvrB subunits scans DNA for abnormalities. Upon binding of the UvrA(2)B(2) complex to a putative damaged site, the DNA wraps around one UvrB monomer. DNA wrap is dependent on ATP binding by UvrB and probably causes local melting of the DNA helix, facilitating insertion of UvrB beta-hairpin between the DNA strands. Then UvrB probes one DNA strand for the presence of a lesion. If a lesion is found the UvrA subunits dissociate and the UvrB-DNA preincision complex is formed. This complex is subsequently bound by UvrC and the second UvrB is released. If no lesion is found, the DNA wraps around the other UvrB subunit that will check the other stand for damage. In Mycobacterium tuberculosis (strain CDC 1551 / Oshkosh), this protein is UvrABC system protein B.